The primary structure comprises 364 residues: Caveolae-associated protein 4 (364 aa).

Residues 1–24 form a disordered region; sequence MEHNGSASNADKIHQNRLSSVTED. The stretch at 44-77 forms a coiled coil; that stretch reads VDSVQASQKRIEERHREMENAIKSVQIDLLKLSQ. Phosphoserine occurs at positions 172 and 173. A coiled-coil region spans residues 202–226; it reads FSKENMQKTRQNLDKKVNRIRTRIV. Positions 231 to 256 are enriched in basic and acidic residues; it reads RERLRQSGERLRQSGERLRQSGERFK. Disordered stretches follow at residues 231-283 and 311-339; these read RERL…RTVA and SDEL…TPEP. Residue tyrosine 326 is modified to Phosphotyrosine. At threonine 336 the chain carries Phosphothreonine. Serine 355 is modified (phosphoserine).

Belongs to the CAVIN family. In terms of assembly, component of the CAVIN complex composed of CAVIN1, CAVIN2, CAVIN3 and CAVIN4. Interacts with CAVIN1, ADRA1A and ADRA1B. Interacts with CAVIN2; this augments the transactivation of NPPA. Interacts with CAV3. Interacts with MAPK1 and MAPK3.

It is found in the cytoplasm. The protein resides in the myofibril. Its subcellular location is the sarcomere. It localises to the cytosol. The protein localises to the cell membrane. It is found in the sarcolemma. The protein resides in the membrane. Its subcellular location is the caveola. Its function is as follows. Modulates the morphology of formed caveolae in cardiomyocytes, but is not required for caveolar formation. Facilitates the recruitment of MAPK1/3 to caveolae within cardiomyocytes and regulates alpha-1 adrenergic receptor-induced hypertrophic responses in cardiomyocytes through MAPK1/3 activation. Contributes to proper membrane localization and stabilization of caveolin-3 (CAV3) in cardiomyocytes. Induces RHOA activation and activates NPPA transcription and myofibrillar organization through the Rho/ROCK signaling pathway. In Homo sapiens (Human), this protein is Caveolae-associated protein 4.